A 1295-amino-acid chain; its full sequence is MNKIYSIKYSAATGGLIAVSELAKKVICKTNRKISAALLSLAVISYTNIIYAANMDISKAWARDYLDLAQNKGVFQPGSTHVKIKLKDGTDFSFPALPVPDFSSATANGAATSIGGAYAVTVAHNAKNKSSANYQTYGSTQYTQINRMTTGNDFSIQRLNKYVVETRGADTSFNYNENNQNIIDRYGVDVGNGKKEIIGFRVGSGNTTFSGIKTSQTYQADLLSASLFHITNLRANTVGGNKVEYENDSYFTNLTTNGDSGSGVYVFDNKEDKWVLLGTTHGIIGNGKTQKTYVTPFDSKTTNELKQLFIQNVNIDNNTATIGGGKITIGNTTQDIEKNKNNQNKDLVFSGGGKISLKENLDLGYGGFIFDENKKYTVSAEGNNNVTFKGAGIDIGKGSTVDWNIKYASNDALHKIGEGSLNVIQAQNTNLKTGNGTVILGAQKTFNNIYVAGGPGTVQLNAENALGEGDYAGIFFTENGGKLDLNGHNQTFKKIAATDSGTTITNSNTTKESVLSVNNQNNYIYHGNVDGNVRLEHHLDTKQDNARLILDGDIQANSISIKNAPLVMQGHATDHAIFRTTKTNNCPEFLCGVDWVTRIKNAENSVNQKNKTTYKSNNQVSDLSQPDWETRKFRFDNLNIEDSSLSIARNADVEGNIQAKNSVINIGDKTAYIDLYSGKNITGAGFTFRQDIKSGDSIGESKFTGGIMATDGSISIGDKAIVTLNTVSSLDRTALTIHKGANVTASSSLFTTSNIKSGGDLTLTGATESTGEITPSMFYAAGGYELTEDGANFTAKNQASVTGDIKSEKAAKLSFGSADKDNSATRYSQFALAMLDGFDTSYQGSIKAAQSSLAMNNALWKVTGNSELKKLNSTGSMVLFNGGKNIFNTLTVDELTTSNSAFVMRTNTQQADQLIVKNKLEGANNLLLVDFIEKKGNDKNGLNIDLVKAPENTSKDVFKTETQTIGFSDVTPEIKQQEKDGKSVWTLTGYKTVANADAAKKATSLMSGGYKAFLAEVNNLNKRMGDLRDINGEAGAWARIMSGTGSAGGGFSDNYTHVQVGADNKHELDGLDLFTGVTMTYTDSHAGSDAFSGETKSVGAGLYASAMFESGAYIDLIGKYVHHDNEYTATFAGLGTRDYSSHSWYAGAEVGYRYHVTDSAWIEPQAELVYGAVSGKQFSWKDQGMNLTMKDKDFNPLIGRTGVDVGKSFSGKDWKVTARAGLGYQFDLFANGETVLRDASGEKRIKGEKDGRMLMNVGLNAEIRDNVRFGLEFEKSAFGKYNVDNAINANFRYSF.

A signal peptide spans 1–52 (MNKIYSIKYSAATGGLIAVSELAKKVICKTNRKISAALLSLAVISYTNIIYA). A Peptidase S6 domain is found at 54–304 (NMDISKAWAR…TPFDSKTTNE (251 aa)). Residues His-124, Asp-153, and Ser-260 each act as charge relay system in the active site. The Autotransporter domain maps to 1029–1295 (DINGEAGAWA…AINANFRYSF (267 aa)).

Post-translationally, cleaved to release the mature protein from the outer membrane.

It is found in the periplasm. The protein localises to the secreted. Its subcellular location is the cell surface. It localises to the cell outer membrane. With respect to regulation, inhibition of cytotoxic activity by phenylmethylsulfonyl fluoride. Serine protease with enterotoxic and cytotoxic activity. Internalization into the host cell is required for the induction of cytopathic effects. However, the serine activity is not necessary for secretion and internalization into the host cell. The chain is Serine protease pet autotransporter (pet) from Escherichia coli O44:H18 (strain 042 / EAEC).